The following is a 150-amino-acid chain: Putative FAD-linked sulfhydryl oxidase 088R (150 aa).

The region spanning G24–Y128 is the ERV/ALR sulfhydryl oxidase domain. C74 and C77 form a disulfide bridge.

Requires FAD as cofactor.

It carries out the reaction 2 R'C(R)SH + O2 = R'C(R)S-S(R)CR' + H2O2. Functionally, FAD-dependent sulfhydryl oxidase that catalyzes disulfide bond formation. The sequence is that of Putative FAD-linked sulfhydryl oxidase 088R from Dryophytes versicolor (chameleon treefrog).